The primary structure comprises 243 residues: 1-(5-phosphoribosyl)-5-[(5-phosphoribosylamino)methylideneamino] imidazole-4-carboxamide isomerase (243 aa).

The active-site Proton acceptor is Asp-8. The active-site Proton donor is Asp-130.

The protein belongs to the HisA/HisF family.

It is found in the cytoplasm. It carries out the reaction 1-(5-phospho-beta-D-ribosyl)-5-[(5-phospho-beta-D-ribosylamino)methylideneamino]imidazole-4-carboxamide = 5-[(5-phospho-1-deoxy-D-ribulos-1-ylimino)methylamino]-1-(5-phospho-beta-D-ribosyl)imidazole-4-carboxamide. It participates in amino-acid biosynthesis; L-histidine biosynthesis; L-histidine from 5-phospho-alpha-D-ribose 1-diphosphate: step 4/9. This Cellvibrio japonicus (strain Ueda107) (Pseudomonas fluorescens subsp. cellulosa) protein is 1-(5-phosphoribosyl)-5-[(5-phosphoribosylamino)methylideneamino] imidazole-4-carboxamide isomerase.